We begin with the raw amino-acid sequence, 121 residues long: MKLSVIVLVASFGFAVALPSKKREETAAENELTGDQQDAEQHMIYAVAFPEIRTSCVIGWKQQGATCERDCECCGVAATCITGDKSTGFCGYHQTPNVLGQGILYTADTIKNGFSAIFCAG.

A signal peptide spans 1–17 (MKLSVIVLVASFGFAVA). Disulfide bonds link cysteine 56–cysteine 74, cysteine 67–cysteine 80, cysteine 71–cysteine 119, and cysteine 73–cysteine 90.

Belongs to the neurotoxin 03 (Tx2) family. 03 subfamily. Expressed by the venom gland.

The protein resides in the secreted. Its function is as follows. Ion channel inhibitor. The chain is U15-barytoxin-Tl1a from Trittame loki (Brush-footed trapdoor spider).